The primary structure comprises 82 residues: Small ribosomal subunit protein bS16 (82 aa).

The protein belongs to the bacterial ribosomal protein bS16 family.

In Vibrio parahaemolyticus serotype O3:K6 (strain RIMD 2210633), this protein is Small ribosomal subunit protein bS16.